Consider the following 145-residue polypeptide: MKVILLEDIANLGKKNDIVDVSDGYAKNFLIRQKKAVALTSKSQEVLNKDLAILQAQEQQAILDATLLKDELEQKPLHFFLKTNNLQTFGSISNKQIIDEINKDQKLVIKHMITKPHALGIGEHIVEISLHKKVIAKVNVIVSKE.

Belongs to the bacterial ribosomal protein bL9 family.

Its function is as follows. Binds to the 23S rRNA. The sequence is that of Large ribosomal subunit protein bL9 from Ureaplasma urealyticum serovar 10 (strain ATCC 33699 / Western).